A 377-amino-acid polypeptide reads, in one-letter code: MSRGIIIIGSGFAARQLVKNIRKQDAHVPLTLIAADSMDEYNKPDLSHVISQSQRADDLNRQLAGEFAEQFNLRLFPHTWVADIDADAHVVKSQDKQWQYDKLVLATGAAAFVPPIAGRELMLTLNSQQEYRACETQLRDAQRVLIVGGGLIGSELAMDLCRAGKTVTLMDNAASLLASLMPPEVSSRLQHHLTDMGVHLLLKSQLQKLEKTEAGIRATLVSQHSIEVDAVIAATGLRPETALARRAGVAVNRGVCVDSYLQTSHPDIYAIGDCAEINGQVLPFLQPIQLSAMYLAKNLLGGNAPLKLPAMLVKVKTPELPLHLAGETQRSDLSWQITAESDGMIAKGMSGEGQLRAFVVSEDRMKEAFALLKTLSV.

Belongs to the FAD-dependent oxidoreductase family. Requires FAD as cofactor.

Its subcellular location is the cytoplasm. The catalysed reaction is 2 reduced [nitric oxide reductase rubredoxin domain] + NAD(+) + H(+) = 2 oxidized [nitric oxide reductase rubredoxin domain] + NADH. It functions in the pathway nitrogen metabolism; nitric oxide reduction. In terms of biological role, one of at least two accessory proteins for anaerobic nitric oxide (NO) reductase. Reduces the rubredoxin moiety of NO reductase. The chain is Nitric oxide reductase FlRd-NAD(+) reductase from Salmonella gallinarum (strain 287/91 / NCTC 13346).